Reading from the N-terminus, the 306-residue chain is tRNA dimethylallyltransferase (306 aa).

12–19 (GPTGTKKS) is an ATP binding site.

It belongs to the IPP transferase family. In terms of assembly, monomer. The cofactor is Mg(2+).

The catalysed reaction is adenosine(37) in tRNA + dimethylallyl diphosphate = N(6)-dimethylallyladenosine(37) in tRNA + diphosphate. Catalyzes the transfer of a dimethylallyl group onto the adenine at position 37 in tRNAs that read codons beginning with uridine, leading to the formation of N6-(dimethylallyl)adenosine (i(6)A). The polypeptide is tRNA dimethylallyltransferase (Mycoplasmoides gallisepticum (strain R(low / passage 15 / clone 2)) (Mycoplasma gallisepticum)).